We begin with the raw amino-acid sequence, 138 residues long: Acidic phospholipase A2 BthA-1 (138 aa).

An N-terminal signal peptide occupies residues 1 to 16 (MRTLWIMAVLLVGVEG). 7 disulfide bridges follow: cysteine 42–cysteine 131, cysteine 44–cysteine 60, cysteine 59–cysteine 111, cysteine 65–cysteine 138, cysteine 66–cysteine 104, cysteine 73–cysteine 97, and cysteine 91–cysteine 102. The Ca(2+) site is built by tyrosine 43, glycine 47, and glycine 48. Histidine 63 is an active-site residue. Aspartate 64 lines the Ca(2+) pocket. Aspartate 105 is an active-site residue.

It belongs to the phospholipase A2 family. Group II subfamily. D49 sub-subfamily. Homodimer; non-covalently linked. The cofactor is Ca(2+). As to expression, expressed by the venom gland.

The protein localises to the secreted. It carries out the reaction a 1,2-diacyl-sn-glycero-3-phosphocholine + H2O = a 1-acyl-sn-glycero-3-phosphocholine + a fatty acid + H(+). Inhibited by EDTA and bromophenacyl bromide (BPB). Functionally, snake venom phospholipase A2 (PLA2) that displays edema-inducing activities (activity that is inhibited by EDTA and dexamethasone), inhibits phospholipid-dependent collagen/ADP-induced platelet aggregation, possess hypotensive as well as anticoagulant activities. In addition, this enzyme shows bactericidal activity against E.coli and S.aureus. PLA2 catalyzes the calcium-dependent hydrolysis of the 2-acyl groups in 3-sn-phosphoglycerides. The sequence is that of Acidic phospholipase A2 BthA-1 from Bothrops jararacussu (Jararacussu).